The following is a 123-amino-acid chain: Small ribosomal subunit protein bS16 (123 aa).

The interval 79–123 is disordered; it reads AGIAKRPSRNNPTKGEPGKKAQERLALAKQAEEEAAAKAAEAASE.

Belongs to the bacterial ribosomal protein bS16 family.

The sequence is that of Small ribosomal subunit protein bS16 from Brucella melitensis biotype 2 (strain ATCC 23457).